The following is a 413-amino-acid chain: Glutamyl-tRNA reductase (413 aa).

Residues 57 to 60 (TCNR), S113, 118 to 120 (DFE), and Q124 each bind substrate. C58 functions as the Nucleophile in the catalytic mechanism. NADP(+) is bound at residue 193–198 (GTGKIG).

This sequence belongs to the glutamyl-tRNA reductase family. Homodimer.

The enzyme catalyses (S)-4-amino-5-oxopentanoate + tRNA(Glu) + NADP(+) = L-glutamyl-tRNA(Glu) + NADPH + H(+). It participates in porphyrin-containing compound metabolism; protoporphyrin-IX biosynthesis; 5-aminolevulinate from L-glutamyl-tRNA(Glu): step 1/2. Catalyzes the NADPH-dependent reduction of glutamyl-tRNA(Glu) to glutamate 1-semialdehyde (GSA). This chain is Glutamyl-tRNA reductase, found in Flavobacterium psychrophilum (strain ATCC 49511 / DSM 21280 / CIP 103535 / JIP02/86).